We begin with the raw amino-acid sequence, 436 residues long: Ribosome biogenesis protein WDR12 homolog (436 aa).

Residues Val13–Lys97 are ubiquitin-like (UBL) domain. WD repeat units follow at residues Pro109–Leu147, Gly149–Lys193, Gly203–Asp242, Gly273–Asn311, Val313–Pro353, Ser359–Ser399, and Ser402–Val436. The interval Asp240–Leu262 is disordered.

It belongs to the WD repeat WDR12/YTM1 family.

Its subcellular location is the nucleus. The protein localises to the nucleolus. It localises to the nucleoplasm. Functionally, required for maturation of ribosomal RNAs and formation of the large ribosomal subunit. The chain is Ribosome biogenesis protein WDR12 homolog from Oryza sativa subsp. japonica (Rice).